The sequence spans 379 residues: Ribosomal RNA large subunit methyltransferase G (379 aa).

This sequence belongs to the methyltransferase superfamily. RlmG family.

Its subcellular location is the cytoplasm. The catalysed reaction is guanosine(1835) in 23S rRNA + S-adenosyl-L-methionine = N(2)-methylguanosine(1835) in 23S rRNA + S-adenosyl-L-homocysteine + H(+). Its function is as follows. Specifically methylates the guanine in position 1835 (m2G1835) of 23S rRNA. This Pectobacterium atrosepticum (strain SCRI 1043 / ATCC BAA-672) (Erwinia carotovora subsp. atroseptica) protein is Ribosomal RNA large subunit methyltransferase G.